The following is a 187-amino-acid chain: V-type ATP synthase subunit E (187 aa).

Belongs to the V-ATPase E subunit family.

Its function is as follows. Produces ATP from ADP in the presence of a proton gradient across the membrane. The polypeptide is V-type ATP synthase subunit E (Geotalea uraniireducens (strain Rf4) (Geobacter uraniireducens)).